Reading from the N-terminus, the 296-residue chain is Protoheme IX farnesyltransferase (296 aa).

The Cytoplasmic portion of the chain corresponds to 1–9; that stretch reads MMFKQYLQV. Residues 10–28 traverse the membrane as a helical segment; the sequence is TKPGIIFGNLISVIGGFLL. Residues 29-37 are Periplasmic-facing; it reads ASKGSIDYP. The chain crosses the membrane as a helical span at residues 38–56; that stretch reads LFIYTLVGVSLVVASGCVF. At 57–78 the chain is on the cytoplasmic side; the sequence is NNYIDRDIDRKMERTKNRVLVK. A helical membrane pass occupies residues 79–97; that stretch reads GLISPAVSLVYATLLGFAG. Over 98-107 the chain is Periplasmic; sequence FMLLWFGANP. A helical transmembrane segment spans residues 108–126; it reads LACWLGVMGFVVYVGVYSL. The Cytoplasmic portion of the chain corresponds to 127-197; sequence YMKRHSVYGT…YQAANIPVLP (71 aa). Residues 198-216 form a helical membrane-spanning segment; it reads VVKGISVAKNHITLYIIAF. Over 217-228 the chain is Periplasmic; that stretch reads AVATLMLSLGGY. Residues 229–247 traverse the membrane as a helical segment; it reads AGYKYLVVAAAVSVWWLGM. The Cytoplasmic portion of the chain corresponds to 248–268; sequence ALRGYKVADDRIWARKLFGFS. Residues 269 to 287 traverse the membrane as a helical segment; sequence IIAITALSVMMSVDFMVPD. The Periplasmic portion of the chain corresponds to 288 to 296; sequence SHTLLAAVW.

The protein belongs to the UbiA prenyltransferase family. Protoheme IX farnesyltransferase subfamily.

The protein localises to the cell inner membrane. The catalysed reaction is heme b + (2E,6E)-farnesyl diphosphate + H2O = Fe(II)-heme o + diphosphate. It participates in porphyrin-containing compound metabolism; heme O biosynthesis; heme O from protoheme: step 1/1. Functionally, converts heme B (protoheme IX) to heme O by substitution of the vinyl group on carbon 2 of heme B porphyrin ring with a hydroxyethyl farnesyl side group. The sequence is that of Protoheme IX farnesyltransferase from Shigella sonnei (strain Ss046).